The sequence spans 348 residues: DNA-directed RNA polymerase subunit alpha (348 aa).

Residues 1-243 (MLIKQGDRLI…DQISVFINFD (243 aa)) form an alpha N-terminal domain (alpha-NTD) region. Residues 260–348 (VNENLFKGID…WLKRKQQNEA (89 aa)) form an alpha C-terminal domain (alpha-CTD) region.

It belongs to the RNA polymerase alpha chain family. Homodimer. The RNAP catalytic core consists of 2 alpha, 1 beta, 1 beta' and 1 omega subunit. When a sigma factor is associated with the core the holoenzyme is formed, which can initiate transcription.

It catalyses the reaction RNA(n) + a ribonucleoside 5'-triphosphate = RNA(n+1) + diphosphate. Functionally, DNA-dependent RNA polymerase catalyzes the transcription of DNA into RNA using the four ribonucleoside triphosphates as substrates. The protein is DNA-directed RNA polymerase subunit alpha of Oleidesulfovibrio alaskensis (strain ATCC BAA-1058 / DSM 17464 / G20) (Desulfovibrio alaskensis).